Here is a 782-residue protein sequence, read N- to C-terminus: General transcription and DNA repair factor IIH helicase/translocase subunit XPB (782 aa).

Residues 1 to 11 are compositionally biased toward basic and acidic residues; it reads MGKRDRADRDK. Disordered stretches follow at residues 1 to 51 and 218 to 241; these read MGKR…ESGT and SAISKTAESSGGPSTSRVTDPQGK. Residues 6–18 carry the Nuclear localization signal motif; the sequence is RADRDKKKSRKRH. The segment covering 21–30 has biased composition (acidic residues); it reads DEEDDEEDAP. Over residues 218-236 the composition is skewed to polar residues; that stretch reads SAISKTAESSGGPSTSRVT. The region spanning 327-488 is the Helicase ATP-binding domain; the sequence is MFGNGRARSG…DLNFLIGPKL (162 aa). 340 to 347 serves as a coordination point for ATP; that stretch reads LPCGAGKS. Positions 441–444 match the DEVH box motif; it reads DEVH. The region spanning 542 to 702 is the Helicase C-terminal domain; it reads RACQFLIKFH…LAGMEEEDLA (161 aa). Positions 642 and 645 each coordinate ATP. S686 carries the post-translational modification Phosphoserine. Residue S751 is modified to Phosphoserine; by CK2.

The protein belongs to the helicase family. RAD25/XPB subfamily. Component of the 7-subunit TFIIH core complex composed of XPB/ERCC3, XPD/ERCC2, GTF2H1, GTF2H2, GTF2H3, GTF2H4 and GTF2H5, which is active in NER. The core complex associates with the 3-subunit CDK-activating kinase (CAK) module composed of CCNH/cyclin H, CDK7 and MNAT1 to form the 10-subunit holoenzyme (holo-TFIIH) active in transcription. Interacts with PUF60. Interacts with ATF7IP. Interacts with KAT2A; leading to KAT2A recruitment to promoters and acetylation of histones. Part of TBP-based Pol II pre-initiation complex (PIC), in which Pol II core assembles with general transcription factors and other specific initiation factors including GTF2E1, GTF2E2, GTF2F1, GTF2F2, TCEA1, ERCC2, ERCC3, GTF2H2, GTF2H3, GTF2H4, GTF2H5, GTF2A1, GTF2A2, GTF2B and TBP; this large multi-subunit PIC complex mediates DNA unwinding and targets Pol II core to the transcription start site where the first phosphodiester bond forms. As to quaternary structure, (Microbial infection) Interacts with Epstein-Barr virus EBNA2. Post-translationally, phosphorylation on Ser-751 by CK2 controls the 5'-excision activity of ERCC1-XPF endonuclease; phosphorylated protein inhibits the excision activity and thus NER. Dephosphorylation reactivates the 5'-excision step. Phosphorylation has no effect on transcription or the 3'-5' helicase activity.

The protein resides in the nucleus. It catalyses the reaction Couples ATP hydrolysis with the unwinding of duplex DNA by translocating in the 3'-5' direction.. The catalysed reaction is ATP + H2O = ADP + phosphate + H(+). With respect to regulation, phosphorylation on Ser-751 by CK2 controls the 5'-excision activity of ERCC1-XPF endonuclease; phosphorylated protein inhibits the excision activity and thus NER. ATPase activity is stimulated by TFIIH subunit p52 (GTF2H4). DNA translocase activity by this subunit in TFIIH is stimulated by XPA, ERCC5/XPG and XFP plus ERCC1; translocase activity is sensitive to triptolide which targets this enzyme. Its function is as follows. ATP-dependent 3'-5' DNA helicase/translocase. Binds dsDNA rather than ssDNA, unzipping it in a translocase rather than classical helicase activity. Component of the general transcription and DNA repair factor IIH (TFIIH) core complex. When complexed to CDK-activating kinase (CAK), involved in RNA transcription by RNA polymerase II. The ATPase activity of XPB/ERCC3, but not its helicase activity, is required for DNA opening; it may wrap around the damaged DNA wedging it open, causing localized melting that allows XPD/ERCC2 helicase to anchor. In transcription, TFIIH has an essential role in transcription initiation. When the pre-initiation complex (PIC) has been established, TFIIH is required for promoter opening and promoter escape. The ATP-dependent helicase activity of XPB/ERCC3 is required for promoter opening and promoter escape. In transcription pre-initiation complexes induces and propagates a DNA twist to open DNA. Also involved in transcription-coupled nucleotide excision repair (NER) of damaged DNA. In NER, TFIIH acts by opening DNA around the lesion to allow the excision of the damaged oligonucleotide and its replacement by a new DNA fragment. The structure of the TFIIH transcription complex differs from the NER-TFIIH complex; large movements by XPD/ERCC2 and XPB/ERCC3 are stabilized by XPA. XPA retains XPB/ERCC3 at the 5' end of a DNA bubble (mimicking DNA damage). This Homo sapiens (Human) protein is General transcription and DNA repair factor IIH helicase/translocase subunit XPB.